A 95-amino-acid polypeptide reads, in one-letter code: Aspartyl/glutamyl-tRNA(Asn/Gln) amidotransferase subunit C (95 aa).

Belongs to the GatC family. In terms of assembly, heterotrimer of A, B and C subunits.

The catalysed reaction is L-glutamyl-tRNA(Gln) + L-glutamine + ATP + H2O = L-glutaminyl-tRNA(Gln) + L-glutamate + ADP + phosphate + H(+). The enzyme catalyses L-aspartyl-tRNA(Asn) + L-glutamine + ATP + H2O = L-asparaginyl-tRNA(Asn) + L-glutamate + ADP + phosphate + 2 H(+). Its function is as follows. Allows the formation of correctly charged Asn-tRNA(Asn) or Gln-tRNA(Gln) through the transamidation of misacylated Asp-tRNA(Asn) or Glu-tRNA(Gln) in organisms which lack either or both of asparaginyl-tRNA or glutaminyl-tRNA synthetases. The reaction takes place in the presence of glutamine and ATP through an activated phospho-Asp-tRNA(Asn) or phospho-Glu-tRNA(Gln). The protein is Aspartyl/glutamyl-tRNA(Asn/Gln) amidotransferase subunit C of Pseudomonas paraeruginosa (strain DSM 24068 / PA7) (Pseudomonas aeruginosa (strain PA7)).